The following is a 418-amino-acid chain: Putative ion-transport protein YfeO (418 aa).

Helical transmembrane passes span 9-31 (MLLLSLPAVAIGIASSLILIVVM), 55-77 (SPLWIIGVLTLTGIAVGLVIRFS), 90-112 (LIGAPVPPSALPGLIVALILGLA), 122-140 (PIMTVNIALAVAIGARLLP), 147-169 (WTILASAGTIGALFGTPVAAALI), 189-211 (PLMAAAAGALTTGLFFHPHFSLP), 223-244 (ILSGAIVAAIAIAAGMVAVWCL), 259-281 (LVLGIGGFILGILGVIGGPVSLF), 301-323 (YFLLAVIKLAALVVAAASGFRGG), 343-363 (VPAVPAAITVSCAILGIVLVV), and 376-398 (VVVPNTTLLPLLCIVMLPAWLLL).

The protein belongs to the chloride channel (TC 2.A.49) family.

The protein resides in the cell membrane. In Escherichia coli O157:H7, this protein is Putative ion-transport protein YfeO (yfeO).